Consider the following 243-residue polypeptide: Carboxy-S-adenosyl-L-methionine synthase (243 aa).

S-adenosyl-L-methionine-binding positions include tyrosine 40, 65–67 (GCS), 90–91 (DN), 118–119 (DI), asparagine 133, and arginine 200.

Belongs to the class I-like SAM-binding methyltransferase superfamily. Cx-SAM synthase family. Homodimer.

The catalysed reaction is prephenate + S-adenosyl-L-methionine = carboxy-S-adenosyl-L-methionine + 3-phenylpyruvate + H2O. Its function is as follows. Catalyzes the conversion of S-adenosyl-L-methionine (SAM) to carboxy-S-adenosyl-L-methionine (Cx-SAM). The chain is Carboxy-S-adenosyl-L-methionine synthase from Shewanella halifaxensis (strain HAW-EB4).